Consider the following 324-residue polypeptide: PDZ domain-containing protein MAGIX (324 aa).

Positions 1–26 (MDSRAGNTADPRGGRRGGGLQGSRSP) are disordered. The region spanning 128–212 (SVELTRGPAG…HLCLVLQRPQ (85 aa)) is the PDZ domain. Residues 216–241 (GSRIKEVGGHRKTDRSLDPRGSRVES) are compositionally biased toward basic and acidic residues. The interval 216-263 (GSRIKEVGGHRKTDRSLDPRGSRVESRSTISPVHHRPKTRTSPRPSPE) is disordered. Residue S261 is modified to Phosphoserine.

The polypeptide is PDZ domain-containing protein MAGIX (Magix) (Mus musculus (Mouse)).